A 445-amino-acid polypeptide reads, in one-letter code: Cryptochrome DASH (445 aa).

The Photolyase/cryptochrome alpha/beta domain occupies 4 to 137; that stretch reads KIGLYWFTFD…VIVQHSVRSL (134 aa).

It belongs to the DNA photolyase class-1 family. FAD serves as cofactor. The cofactor is (6R)-5,10-methylene-5,6,7,8-tetrahydrofolate.

May have a photoreceptor function. Binds DNA; probably functions as a transcriptional repressor. This chain is Cryptochrome DASH (cry), found in Vibrio parahaemolyticus serotype O3:K6 (strain RIMD 2210633).